The sequence spans 476 residues: MVNLLSEKTSGTNVAEFTVSEIAGALKRVVEEKFGYVRVRGEISGYRGAHASGHAYFALKDDKARLEAVIWRGVMEKLKFPPEEGMEVVAVGKLTTYPGSSKYQIVIEALEPTGVGALMTLLENRKKKFAEEGLFDEAKKKPLPYMPRIIGVVTSPTGAVIRDIIHRISDRFPLHVLVWPVRVQGETSGSEVAAAVEGFNALASEGHIPKPDLIIVARGGGSLEDLWGFNDEAVVRAVYASDLPIISAVGHETDWTLIDYVADWRAPTPTGAAEKAVPVKLDLEVCVASLGARLRKGLARSFDFHQQKLCAARRGLPSADQLFSLPRRGFDEISSRLQRALCVSYDKKRFSFHALHLRLSPRLLKSEKAQRHTKEYTARLYRAFMRSVEKKRSALELACRLLKSTSYQNILERGFVLVLGQNHKPIKRLAQFPESGQINLRFFDGDIHVATQEPFSAARSKHKKIKSPSDDQGTLF.

The protein belongs to the XseA family. In terms of assembly, heterooligomer composed of large and small subunits.

It localises to the cytoplasm. The catalysed reaction is Exonucleolytic cleavage in either 5'- to 3'- or 3'- to 5'-direction to yield nucleoside 5'-phosphates.. Functionally, bidirectionally degrades single-stranded DNA into large acid-insoluble oligonucleotides, which are then degraded further into small acid-soluble oligonucleotides. The polypeptide is Exodeoxyribonuclease 7 large subunit (Bartonella tribocorum (strain CIP 105476 / IBS 506)).